The chain runs to 250 residues: Homeobox protein Dlx4a (250 aa).

Residues 123–182 (IRKPRTIYSSLQLQALNQRFQQTQYLALPERADLAAKLGLTQTQVKIWFQNKRSKYKKIM) constitute a DNA-binding region (homeobox). Residues 182–202 (MKHGSSGPEGEHLQAASASGA) are disordered.

Belongs to the distal-less homeobox family.

It is found in the nucleus. In Danio rerio (Zebrafish), this protein is Homeobox protein Dlx4a (dlx4a).